A 326-amino-acid chain; its full sequence is Tagatose 1,6-diphosphate aldolase 2 (326 aa).

The protein belongs to the aldolase LacD family.

It catalyses the reaction D-tagatofuranose 1,6-bisphosphate = D-glyceraldehyde 3-phosphate + dihydroxyacetone phosphate. Its pathway is carbohydrate metabolism; D-tagatose 6-phosphate degradation; D-glyceraldehyde 3-phosphate and glycerone phosphate from D-tagatose 6-phosphate: step 2/2. In Streptococcus agalactiae serotype III (strain NEM316), this protein is Tagatose 1,6-diphosphate aldolase 2 (lacD2).